Consider the following 461-residue polypeptide: UDP-glycosyltransferase 82A1 (461 aa).

UDP-alpha-D-glucose contacts are provided by residues Ser-292, 349-351 (APQ), 366-374 (HCGWNSTME), and 388-391 (AGDQ).

Belongs to the UDP-glycosyltransferase family.

The chain is UDP-glycosyltransferase 82A1 (UGT82A1) from Arabidopsis thaliana (Mouse-ear cress).